The chain runs to 354 residues: Guanine nucleotide-binding protein G(q) subunit alpha (354 aa).

Residues Cys3 and Cys4 are each lipidated (S-palmitoyl cysteine). Residues 32-354 form the G-alpha domain; sequence RELKLLLLGT…QLNLKEYNLV (323 aa). The segment at 35-48 is G1 motif; that stretch reads KLLLLGTGESGKST. GTP contacts are provided by residues 40 to 47, 174 to 180, 199 to 203, 269 to 272, and Ala326; these read GTGESGKS, LRVRVPT, DVGGQ, and NKKD. Mg(2+)-binding residues include Ser47 and Thr180. Residues 172-180 are G2 motif; it reads DILRVRVPT. Residues 195 to 204 form a G3 motif region; it reads FRMVDVGGQR. Residues 265 to 272 are G4 motif; that stretch reads ILFLNKKD. The interval 324 to 329 is G5 motif; sequence TCATDT.

It belongs to the G-alpha family. G(q) subfamily. G proteins are composed of 3 units; alpha, beta and gamma. The alpha chain contains the guanine nucleotide binding site. A high concentration was found in the retinal light-sensitive outer segment.

Functionally, guanine nucleotide-binding proteins (G proteins) are involved as modulators or transducers in various transmembrane signaling systems. The G(q) alpha subunit is involved in the light-dependent activation of phospholipase C. The protein is Guanine nucleotide-binding protein G(q) subunit alpha of Loligo forbesii (Veined squid).